We begin with the raw amino-acid sequence, 288 residues long: Light-independent protochlorophyllide reductase iron-sulfur ATP-binding protein (288 aa).

ATP contacts are provided by residues 12–17 (GIGKST) and lysine 41. Residue serine 16 participates in Mg(2+) binding. [4Fe-4S] cluster-binding residues include cysteine 97 and cysteine 131. 182–183 (NR) lines the ATP pocket.

It belongs to the NifH/BchL/ChlL family. In terms of assembly, homodimer. Protochlorophyllide reductase is composed of three subunits; ChlL, ChlN and ChlB. It depends on [4Fe-4S] cluster as a cofactor.

It carries out the reaction chlorophyllide a + oxidized 2[4Fe-4S]-[ferredoxin] + 2 ADP + 2 phosphate = protochlorophyllide a + reduced 2[4Fe-4S]-[ferredoxin] + 2 ATP + 2 H2O. It functions in the pathway porphyrin-containing compound metabolism; chlorophyll biosynthesis (light-independent). Functionally, component of the dark-operative protochlorophyllide reductase (DPOR) that uses Mg-ATP and reduced ferredoxin to reduce ring D of protochlorophyllide (Pchlide) to form chlorophyllide a (Chlide). This reaction is light-independent. The L component serves as a unique electron donor to the NB-component of the complex, and binds Mg-ATP. The protein is Light-independent protochlorophyllide reductase iron-sulfur ATP-binding protein of Picosynechococcus sp. (strain ATCC 27264 / PCC 7002 / PR-6) (Agmenellum quadruplicatum).